A 374-amino-acid chain; its full sequence is 5-hydroxytryptamine receptor 1D (374 aa).

The Extracellular segment spans residues 1–35; the sequence is MSPPNQSLEGLPQEASNRSLNVTGAWDPEVLQALR. 3 N-linked (GlcNAc...) asparagine glycosylation sites follow: Asn-5, Asn-17, and Asn-21. A helical membrane pass occupies residues 36–61; sequence ISLVVVLSVITLATVLSNAFVLTTIL. The Cytoplasmic segment spans residues 62–72; the sequence is LTKKLHTPANY. The helical transmembrane segment at 73–94 threads the bilayer; the sequence is LIGSLATTDLLVSILVMPISIA. Topologically, residues 95–106 are extracellular; it reads YTTTRTWNFGQI. A helical membrane pass occupies residues 107–131; it reads LCDIWVSSDITCCTASILHLCVIAL. The cysteines at positions 108 and 185 are disulfide-linked. Residues Asp-115 and Cys-119 each contribute to the serotonin site. The DRY motif; important for ligand-induced conformation changes motif lies at 132–134; sequence DRY. The Cytoplasmic portion of the chain corresponds to 132 to 151; it reads DRYWAITDALEYSKRRTAGH. A helical transmembrane segment spans residues 152–173; the sequence is AAAMIAAVWIISICISIPPLFW. Residues 174–191 lie on the Extracellular side of the membrane; sequence RQATAHEEMSDCLVNTSQ. The helical transmembrane segment at 192–215 threads the bilayer; it reads ISYTIYSTCGAFYIPSILLIILYG. At 216–297 the chain is on the cytoplasmic side; sequence RIYVAARSRI…ISAARERKAT (82 aa). A helical membrane pass occupies residues 298 to 323; the sequence is KTLGIILGAFIICWLPFFVVSLVLPI. Ser-318 contacts serotonin. The Extracellular segment spans residues 324 to 332; that stretch reads CRDSCWIHP. Residues 333 to 356 form a helical membrane-spanning segment; that stretch reads ALFDFFTWLGYLNSLINPVIYTVF. Residues 349-353 carry the NPxxY motif; important for ligand-induced conformation changes and signaling motif; that stretch reads NPVIY. The Cytoplasmic portion of the chain corresponds to 357-374; the sequence is NEDFRQAFQKVVHFRKIS.

It belongs to the G-protein coupled receptor 1 family. Homodimer. Heterodimer with HTR1B. As to expression, detected in the motor column in spinal cord, and in several cranial motor nuclei, including nucleus ambiguous, oculomotoris, trochelaris and abducens. Detected in gamma motor neurons in the lumbar spinal cord. Detected in proprioceptive sensory neurons in dorsal root ganglia.

The protein localises to the cell membrane. In terms of biological role, G-protein coupled receptor for 5-hydroxytryptamine (serotonin). Also functions as a receptor for ergot alkaloid derivatives, various anxiolytic and antidepressant drugs and other psychoactive substances. Ligand binding causes a conformation change that triggers signaling via guanine nucleotide-binding proteins (G proteins) and modulates the activity of downstream effectors, such as adenylate cyclase. HTR1D is coupled to G(i)/G(o) G alpha proteins and mediates inhibitory neurotransmission by inhibiting adenylate cyclase activity. Regulates the release of 5-hydroxytryptamine in the brain, and thereby affects neural activity. May also play a role in regulating the release of other neurotransmitters. May play a role in vasoconstriction. In Mus musculus (Mouse), this protein is 5-hydroxytryptamine receptor 1D (Htr1d).